A 702-amino-acid polypeptide reads, in one-letter code: Soluble guanylate cyclase gcy-31 (702 aa).

H104 serves as a coordination point for heme. Residues 368-406 are a coiled coil; the sequence is TQQSAELKLLLHQEAQKSRNMRENMNRLKKERRRTDKLL. A Guanylate cyclase domain is found at 435–564; that stretch reads TILFTDIVEF…ETVYVANKME (130 aa). Mg(2+)-binding residues include D440 and D484. Residues 614-702 are disordered; the sequence is RHGPHRVPSP…QDLTPRKSIT (89 aa). The span at 633–643 shows a compositional bias: acidic residues; sequence SQTEDDDDDEL. A compositionally biased stretch (polar residues) spans 683-695; sequence RNSNKTPRQSQDL.

It belongs to the adenylyl cyclase class-4/guanylyl cyclase family. As to quaternary structure, heterodimer; with other soluble guanylate cyclases. The cofactor is heme. Expressed in a pair of bilaterally symmetric neurons in the head.

Its subcellular location is the cytoplasm. The catalysed reaction is GTP = 3',5'-cyclic GMP + diphosphate. May be regulated by molecular oxygen. Probably not activated by nitric oxide (NO). In terms of biological role, synthesizes cyclic GMP (cGMP) from GTP. May play a role in embryogenesis. This is Soluble guanylate cyclase gcy-31 (gcy-31) from Caenorhabditis elegans.